Here is a 4912-residue protein sequence, read N- to C-terminus: Probable E3 ubiquitin-protein ligase HERC2 (4912 aa).

The tract at residues 1 to 67 (MFNRQASGGA…GSGSAAPPSH (67 aa)) is disordered. Gly residues predominate over residues 8-17 (GGAGSSGQGA). A compositionally biased stretch (low complexity) spans 18–31 (GSSQTASAAPVSAG). Gly residues-rich tracts occupy residues 32 to 41 (VGVGGGGGAS) and 49 to 59 (SAAGSGSGSGS). 5 RCC1 repeats span residues 634-685 (NHNA…AITC), 686-739 (GGNL…ALTS), 741-789 (GLVF…ALSS), 791-843 (GQLY…ALSS), and 844-897 (SGEV…VWTQ). Disordered regions lie at residues 1102–1129 (RLSP…STSP), 1428–1475 (QLLQ…PGRG), and 1659–1681 (QEQE…EEET). A compositionally biased stretch (polar residues) spans 1446–1458 (SHSCHSTAGNTPT). A Phosphothreonine modification is found at Thr-1776. The region spanning 1917–1990 (SGPDLAKLMK…QYDLQLADSA (74 aa)) is the MIB/HERC2 domain. Disordered regions lie at residues 1994–2018 (ASPT…SHPS) and 2381–2412 (GSIY…SGSG). Residues 2396–2412 (ESQQPGEQDQQLSSGSG) show a composition bias toward polar residues. In terms of domain architecture, UBA spans 2511-2557 (ATDAQLIGQIMEMGFTRRTVELALKQLSLQAEIMPTPEQIVQWILEH). The disordered stretch occupies residues 2572–2620 (LASSASSHDPEADSDNECPSSNSTTSSSTSSDTVEGQPMAVSGPAPPVK). Low complexity predominate over residues 2591-2604 (SSNSTTSSSTSSDT). In terms of domain architecture, CPH spans 2624–2699 (RKDFQTADLY…VCFVHIELVE (76 aa)). The DOC domain occupies 2780 to 2958 (TSATLPSLGD…FLASEYSAGV (179 aa)). 7 RCC1 repeats span residues 2985–3036 (PCTV…IVSQ), 3037–3090 (DGKV…ALTL), 3091–3142 (DGKV…AISS), 3144–3194 (GELY…TLAL), 3197–3248 (DGAV…ALTR), 3250–3300 (GEVW…AVTD), and 3302–3352 (GQVY…AWGL). 2 disordered regions span residues 3352 to 3374 (LPNA…RDPL) and 3953 to 4000 (LPSS…EQPD). The segment covering 3974–3988 (LNSTTSLSSSTVSNV) has biased composition (low complexity). RCC1 repeat units lie at residues 4049–4099 (STIY…AVTP), 4101–4153 (GKLF…ALTT), 4155–4205 (GEVY…AITA), 4207–4259 (GHVL…CITD), 4261–4311 (DNVW…ALTK), 4313–4363 (GAVY…ACSD), and 4365–4415 (GEVY…ALST). One can recognise an HECT domain in the interval 4547-4882 (ALALPHRVWK…IHFCKSIDTD (336 aa)). Catalysis depends on Cys-4850, which acts as the Glycyl thioester intermediate. The tract at residues 4891–4912 (EPTEATGSEDNSDLESVASHEG) is disordered.

The protein localises to the cytoplasm. The protein resides in the cytoskeleton. It is found in the microtubule organizing center. It localises to the centrosome. Its subcellular location is the centriole. It catalyses the reaction S-ubiquitinyl-[E2 ubiquitin-conjugating enzyme]-L-cysteine + [acceptor protein]-L-lysine = [E2 ubiquitin-conjugating enzyme]-L-cysteine + N(6)-ubiquitinyl-[acceptor protein]-L-lysine.. The protein operates within protein modification; protein ubiquitination. In terms of biological role, probable E3 ubiquitin-protein ligase which accepts ubiquitin from an E2 ubiquitin-conjugating enzyme in the form of a thioester and then directly transfers the ubiquitin to targeted substrates. The protein is Probable E3 ubiquitin-protein ligase HERC2 (HERC2) of Drosophila melanogaster (Fruit fly).